The sequence spans 310 residues: AA9 family lytic polysaccharide monooxygenase A (310 aa).

A signal peptide spans 1–21; that stretch reads MPSTKVAALSAVLALASTVAG. Residues H22 and H107 each coordinate Cu(2+). Cystine bridges form between C77-C199 and C118-C122. N121 and N159 each carry an N-linked (GlcNAc...) asparagine glycan. Residue H185 participates in O2 binding. Y196 contributes to the Cu(2+) binding site.

It belongs to the polysaccharide monooxygenase AA9 family. Cu(2+) is required as a cofactor.

The protein localises to the secreted. It catalyses the reaction [(1-&gt;4)-beta-D-glucosyl]n+m + reduced acceptor + O2 = 4-dehydro-beta-D-glucosyl-[(1-&gt;4)-beta-D-glucosyl]n-1 + [(1-&gt;4)-beta-D-glucosyl]m + acceptor + H2O.. In terms of biological role, lytic polysaccharide monooxygenase (LPMO) that depolymerizes crystalline and amorphous polysaccharides via the oxidation of scissile alpha- or beta-(1-4)-glycosidic bonds, yielding C1, C4 as well as C6 oxidation products. Catalysis by LPMOs requires the reduction of the active-site copper from Cu(II) to Cu(I) by a reducing agent and H(2)O(2) or O(2) as a cosubstrate. Active on cellulose, but not on xylan, starch, or chitin. The protein is AA9 family lytic polysaccharide monooxygenase A of Talaromyces pinophilus (Penicillium pinophilum).